The sequence spans 117 residues: MPSPGTVCSLLLLGMLWLDLAMAGSSFLSPEHQRAQQRKESKKPPAKLQPRALGGWLRPEDGDQAEGAEDELEIQFNAPFDVGIKLSGVQYQQHSQALGKFLQDILWEEAKEAPADK.

An N-terminal signal peptide occupies residues Met1–Ala23. Ser26 is lipidated: O-decanoyl serine; alternate. Ser26 carries O-hexanoyl serine; alternate lipidation. Ser26 carries the O-octanoyl serine; alternate lipid modification. The segment at Ser29–Gly67 is disordered. The segment covering Glu31–Lys43 has biased composition (basic and acidic residues). The propeptide at Ala52 to Gln75 is removed in mature form. Leu98 bears the Leucine amide mark. The propeptide at Gly99–Lys117 is removed in mature form.

It belongs to the motilin family. O-octanoylated by GOAT/MBOAT4. O-octanoylation is essential for ghrelin activity. Post-translationally, amidation of Leu-98 is essential for obestatin activity.

It localises to the secreted. Ghrelin is the ligand for growth hormone secretagogue receptor type 1 (GHSR). Induces the release of growth hormone from the pituitary. Has an appetite-stimulating effect, induces adiposity and stimulates gastric acid secretion. Involved in growth regulation. In terms of biological role, obestatin may be the ligand for GPR39. May have an appetite-reducing effect resulting in decreased food intake. May reduce gastric emptying activity and jejunal motility. The protein is Appetite-regulating hormone (GHRL) of Papio hamadryas (Hamadryas baboon).